The sequence spans 348 residues: Phenylalanine--tRNA ligase alpha subunit (348 aa).

Residue Glu-268 coordinates Mg(2+).

It belongs to the class-II aminoacyl-tRNA synthetase family. Phe-tRNA synthetase alpha subunit type 1 subfamily. As to quaternary structure, tetramer of two alpha and two beta subunits. Mg(2+) is required as a cofactor.

Its subcellular location is the cytoplasm. The catalysed reaction is tRNA(Phe) + L-phenylalanine + ATP = L-phenylalanyl-tRNA(Phe) + AMP + diphosphate + H(+). The chain is Phenylalanine--tRNA ligase alpha subunit from Bordetella parapertussis (strain 12822 / ATCC BAA-587 / NCTC 13253).